The sequence spans 97 residues: RNA-binding protein Hfq (97 aa).

The region spanning 10–70 is the Sm domain; that stretch reads DPFLNALRKE…ISTIVPARSV (61 aa). The segment at 75 to 97 is disordered; sequence ENRPQAAPASTLVQVETVQQPAE. Residues 85–97 show a composition bias toward polar residues; sequence TLVQVETVQQPAE.

Belongs to the Hfq family. In terms of assembly, homohexamer.

RNA chaperone that binds small regulatory RNA (sRNAs) and mRNAs to facilitate mRNA translational regulation in response to envelope stress, environmental stress and changes in metabolite concentrations. Also binds with high specificity to tRNAs. This is RNA-binding protein Hfq from Neisseria meningitidis serogroup C / serotype 2a (strain ATCC 700532 / DSM 15464 / FAM18).